A 301-amino-acid polypeptide reads, in one-letter code: Phosphatidylserine decarboxylase proenzyme (301 aa).

Residues Asp117, His173, and Ser260 each act as charge relay system; for autoendoproteolytic cleavage activity in the active site. The Schiff-base intermediate with substrate; via pyruvic acid; for decarboxylase activity role is filled by Ser260. The residue at position 260 (Ser260) is a Pyruvic acid (Ser); by autocatalysis.

The protein belongs to the phosphatidylserine decarboxylase family. PSD-B subfamily. Prokaryotic type II sub-subfamily. As to quaternary structure, heterodimer of a large membrane-associated beta subunit and a small pyruvoyl-containing alpha subunit. Pyruvate serves as cofactor. Is synthesized initially as an inactive proenzyme. Formation of the active enzyme involves a self-maturation process in which the active site pyruvoyl group is generated from an internal serine residue via an autocatalytic post-translational modification. Two non-identical subunits are generated from the proenzyme in this reaction, and the pyruvate is formed at the N-terminus of the alpha chain, which is derived from the carboxyl end of the proenzyme. The autoendoproteolytic cleavage occurs by a canonical serine protease mechanism, in which the side chain hydroxyl group of the serine supplies its oxygen atom to form the C-terminus of the beta chain, while the remainder of the serine residue undergoes an oxidative deamination to produce ammonia and the pyruvoyl prosthetic group on the alpha chain. During this reaction, the Ser that is part of the protease active site of the proenzyme becomes the pyruvoyl prosthetic group, which constitutes an essential element of the active site of the mature decarboxylase.

It localises to the cell membrane. The catalysed reaction is a 1,2-diacyl-sn-glycero-3-phospho-L-serine + H(+) = a 1,2-diacyl-sn-glycero-3-phosphoethanolamine + CO2. It functions in the pathway phospholipid metabolism; phosphatidylethanolamine biosynthesis; phosphatidylethanolamine from CDP-diacylglycerol: step 2/2. In terms of biological role, catalyzes the formation of phosphatidylethanolamine (PtdEtn) from phosphatidylserine (PtdSer). This is Phosphatidylserine decarboxylase proenzyme from Chlamydia trachomatis serovar L2 (strain ATCC VR-902B / DSM 19102 / 434/Bu).